Here is a 183-residue protein sequence, read N- to C-terminus: MSTISVLITALALSMDAMSLSIYQGIASTESQKKQNFLKIVLTFGIFQFAMALVGSLSGILFIHYISLYSKYVSFAIFLFLGLMMLKEALKKEEMEYDEKYLDFKTLIIMGIATSLDALLVGLTFSILPFYQTFLYTVEIGVITAIIAGLGFILGDKFGNILGQKSHFLGAALLIFISINILL.

Helical transmembrane passes span 3–23 (TISV…LSIY), 43–63 (TFGI…ILFI), 66–86 (ISLY…LMML), 107–127 (LIIM…TFSI), 134–154 (FLYT…GFIL), and 161–181 (ILGQ…SINI).

This sequence belongs to the MntP (TC 9.B.29) family.

The protein localises to the cell inner membrane. Probably functions as a manganese efflux pump. The sequence is that of Putative manganese efflux pump MntP from Fusobacterium nucleatum subsp. nucleatum (strain ATCC 25586 / DSM 15643 / BCRC 10681 / CIP 101130 / JCM 8532 / KCTC 2640 / LMG 13131 / VPI 4355).